Reading from the N-terminus, the 638-residue chain is MSSTQQQQHQLFSAVEQNDVTKVKKLSSKKKISKSNLTSFDQYGQSALTIALKNNNEEMVELLLSLCVTLKADINTFDKNGFSALHQAVSSDDRILMRVLQYENINVDVQNDDLNTPIHYFCQKFRSPNCQEPFQLFIQKGVNVNAQNKNGETPLHKAIFNNSVRLMMVGLLLKNGANVNLATQFQESPLHYAVRLGREDLVSVLLKAGADVDCVGTKERKTPYQLAVEEGNKDMTARIKKYKDLFDWLQKHGFEQYKDAFLKEEMFLDELGEMSEDILNKMGITSTGTRLRILKETSNLANEQTKKPKTPELIIEEDPTPPDTPDISGLRHSLHTLRHVGEVNIINDNELEYTEKLGAGSSGKVYKGLYRGKEVAIKVLKSMTESKEIEEFKKEFQIMSAIRSKHVVHFYGAVLEPKLCMVMENCSRGSLYHVMDNNSLDIGWERTFRFAIETVRGIECLHKWDPPIVHRDLKSLNLLVNDKWEIKVCDFGLSRFNTGSNLETLVKMRGTFAYCAPEVYYGEQFSGKSDVYSIAVILWELVTRCINGRYERPFSEYKNLQHDFQIIIQTAKKNLRPTIPNACPESLVSLIQDCWDPNLENRPTCTDILSRLVTIENEYRSNIQTWNNLIVPLPKNQE.

6 ANK repeats span residues 43–72, 80–109, 113–146, 150–181, 185–214, and 219–248; these read YGQSALTIALKNNNEEMVELLLSLCVTLKA, NGFSALHQAVSSDDRILMRVLQYENINVDV, DLNTPIHYFCQKFRSPNCQEPFQLFIQKGVNVNA, NGETPLHKAIFNNSVRLMMVGLLLKNGANVNL, FQESPLHYAVRLGREDLVSVLLKAGADVDC, and ERKTPYQLAVEEGNKDMTARIKKYKDLFDW. The region spanning 240-303 is the SAM domain; that stretch reads KKYKDLFDWL…LKETSNLANE (64 aa). In terms of domain architecture, Protein kinase spans 351 to 620; the sequence is LEYTEKLGAG…RLVTIENEYR (270 aa). ATP-binding positions include 357–365 and K378; that span reads LGAGSSGKV. The Proton acceptor role is filled by D472.

Belongs to the protein kinase superfamily. TKL Ser/Thr protein kinase family. In terms of assembly, interacts with F-actin. Autophosphorylated.

The protein localises to the cytoplasm. It is found in the cytoskeleton. The catalysed reaction is L-seryl-[protein] + ATP = O-phospho-L-seryl-[protein] + ADP + H(+). The enzyme catalyses L-threonyl-[protein] + ATP = O-phospho-L-threonyl-[protein] + ADP + H(+). May be involved in cortical F-actin organization and resistance to osmotic stress. Activated upon cell detachment, in vitro. This is Stress-activated protein kinase alpha (spkA-1) from Dictyostelium discoideum (Social amoeba).